A 402-amino-acid polypeptide reads, in one-letter code: Tryptophan synthase beta chain 2 (402 aa).

Position 97 is an N6-(pyridoxal phosphate)lysine (K97).

It belongs to the TrpB family. As to quaternary structure, tetramer of two alpha and two beta chains. Pyridoxal 5'-phosphate serves as cofactor.

The enzyme catalyses (1S,2R)-1-C-(indol-3-yl)glycerol 3-phosphate + L-serine = D-glyceraldehyde 3-phosphate + L-tryptophan + H2O. It functions in the pathway amino-acid biosynthesis; L-tryptophan biosynthesis; L-tryptophan from chorismate: step 5/5. The beta subunit is responsible for the synthesis of L-tryptophan from indole and L-serine. This chain is Tryptophan synthase beta chain 2 (trpB2), found in Wolinella succinogenes (strain ATCC 29543 / DSM 1740 / CCUG 13145 / JCM 31913 / LMG 7466 / NCTC 11488 / FDC 602W) (Vibrio succinogenes).